Here is a 137-residue protein sequence, read N- to C-terminus: Large ribosomal subunit protein bL17 (137 aa).

It belongs to the bacterial ribosomal protein bL17 family. In terms of assembly, part of the 50S ribosomal subunit. Contacts protein L32.

This Caulobacter vibrioides (strain ATCC 19089 / CIP 103742 / CB 15) (Caulobacter crescentus) protein is Large ribosomal subunit protein bL17.